A 465-amino-acid polypeptide reads, in one-letter code: ATP synthase subunit beta (465 aa).

Residue Gly152–Thr159 coordinates ATP.

Belongs to the ATPase alpha/beta chains family. In terms of assembly, F-type ATPases have 2 components, CF(1) - the catalytic core - and CF(0) - the membrane proton channel. CF(1) has five subunits: alpha(3), beta(3), gamma(1), delta(1), epsilon(1). CF(0) has three main subunits: a(1), b(2) and c(9-12). The alpha and beta chains form an alternating ring which encloses part of the gamma chain. CF(1) is attached to CF(0) by a central stalk formed by the gamma and epsilon chains, while a peripheral stalk is formed by the delta and b chains.

It is found in the cell inner membrane. The catalysed reaction is ATP + H2O + 4 H(+)(in) = ADP + phosphate + 5 H(+)(out). Produces ATP from ADP in the presence of a proton gradient across the membrane. The catalytic sites are hosted primarily by the beta subunits. The chain is ATP synthase subunit beta from Campylobacter jejuni subsp. jejuni serotype O:6 (strain 81116 / NCTC 11828).